Here is a 126-residue protein sequence, read N- to C-terminus: Large ribosomal subunit protein bL12 (126 aa).

This sequence belongs to the bacterial ribosomal protein bL12 family. In terms of assembly, homodimer. Part of the ribosomal stalk of the 50S ribosomal subunit. Forms a multimeric L10(L12)X complex, where L10 forms an elongated spine to which 2 to 4 L12 dimers bind in a sequential fashion. Binds GTP-bound translation factors.

In terms of biological role, forms part of the ribosomal stalk which helps the ribosome interact with GTP-bound translation factors. Is thus essential for accurate translation. The sequence is that of Large ribosomal subunit protein bL12 from Saccharophagus degradans (strain 2-40 / ATCC 43961 / DSM 17024).